A 418-amino-acid polypeptide reads, in one-letter code: Histidinol dehydrogenase (418 aa).

NAD(+) is bound by residues Y119, Q180, and N203. The substrate site is built by T226, Q248, and H251. Zn(2+) contacts are provided by Q248 and H251. Active-site proton acceptor residues include E316 and H317. Positions 317, 350, 404, and 409 each coordinate substrate. Residue D350 participates in Zn(2+) binding. Residue H409 coordinates Zn(2+).

It belongs to the histidinol dehydrogenase family. The cofactor is Zn(2+).

The catalysed reaction is L-histidinol + 2 NAD(+) + H2O = L-histidine + 2 NADH + 3 H(+). It participates in amino-acid biosynthesis; L-histidine biosynthesis; L-histidine from 5-phospho-alpha-D-ribose 1-diphosphate: step 9/9. Its function is as follows. Catalyzes the sequential NAD-dependent oxidations of L-histidinol to L-histidinaldehyde and then to L-histidine. The polypeptide is Histidinol dehydrogenase (Staphylococcus aureus (strain MRSA252)).